The following is a 78-amino-acid chain: UPF0154 protein SSU98_1719 (78 aa).

The helical transmembrane segment at 3-23 (LGLAILLIVLAFAGGVALGIY) threads the bilayer.

This sequence belongs to the UPF0154 family.

The protein resides in the cell membrane. This is UPF0154 protein SSU98_1719 from Streptococcus suis (strain 98HAH33).